A 109-amino-acid chain; its full sequence is RNA-binding protein Hfq (109 aa).

In terms of domain architecture, Sm spans 9–68 (DPFLNALRKEKVSVSVYLVNGIKLQGQVEAFDQFCIVLRNTVNQMVYKHAISTIVPAKSV). Residues 77–109 (PYHQNSNDEQDENVDDIHSDDLEIQENEGNIHE) are disordered.

This sequence belongs to the Hfq family. As to quaternary structure, homohexamer.

Its function is as follows. RNA chaperone that binds small regulatory RNA (sRNAs) and mRNAs to facilitate mRNA translational regulation in response to envelope stress, environmental stress and changes in metabolite concentrations. Also binds with high specificity to tRNAs. The sequence is that of RNA-binding protein Hfq from Francisella tularensis subsp. tularensis (strain FSC 198).